We begin with the raw amino-acid sequence, 217 residues long: GTP-binding protein Rit2 (217 aa).

GTP is bound by residues 27–34 (GAGGVGKS), 74–78 (DTAGQ), and 133–136 (NKID).

This sequence belongs to the small GTPase superfamily. Ras family. As to quaternary structure, interacts with PLXNB3. Interacts with AFDN, the C-terminal domain of RALGDS and RLF, but not with RIN1 and PIK3CA. RLF binds exclusively to the active GTP-bound form. Binds calmodulin. Interacts with POU4F1 (via N-terminus); the interaction controls POU4F1 transactivation activity on some neuronal target genes. Expressed in ganglion cell layer (GCL), inner plexiform layer (IPL) and inner nuclear layer (INL) of the retina. Expressed in retinal ganglion cells (RGCs). Expressed in horizontal, bipolar and amacrine cells, but not Mueller glia, of the INL (at protein level). Neuron-specific. Expressed in ganglion cell layer (GCL) and inner plexiform layer (IPL).

It localises to the nucleus. It is found in the cell membrane. The catalysed reaction is GTP + H2O = GDP + phosphate + H(+). Alternates between an inactive form bound to GDP and an active form bound to GTP. Its function is as follows. Binds and exchanges GTP and GDP. Binds and modulates the activation of POU4F1 as gene expression regulator. In Mus musculus (Mouse), this protein is GTP-binding protein Rit2 (Rit2).